Consider the following 896-residue polypeptide: Putative mannosylglycerate hydrolase (896 aa).

A divalent metal cation contacts are provided by His-12, Asp-14, Asp-125, and His-348. Catalysis depends on Asp-125, which acts as the Nucleophile.

Belongs to the glycosyl hydrolase 38 family. A divalent metal cation is required as a cofactor.

It carries out the reaction (2R)-2-O-(6-phospho-alpha-D-mannosyl)-glycerate + H2O = alpha-D-mannose 6-phosphate + (R)-glycerate. Functionally, may hydrolyze 6-phospho-mannosyl-D-glycerate to mannose-6-phosphate and glycerate. This chain is Putative mannosylglycerate hydrolase (mngB), found in Halalkalibacterium halodurans (strain ATCC BAA-125 / DSM 18197 / FERM 7344 / JCM 9153 / C-125) (Bacillus halodurans).